The sequence spans 141 residues: VLSSADKTNIKAAWDKVGGNAGEYGAEALERMFLSFPTTKTYFPHFDLSHGSAQVKGHGKKVGDALTNAVGHLDDLPGALSALSDLHAYKLRVDPVNFKLLSHCLLVTLANHLPSDFTPAVHASLDKFLASVSTVLTSKYR.

The region spanning 1–141 is the Globin domain; it reads VLSSADKTNI…VSTVLTSKYR (141 aa). S3 carries the phosphoserine modification. K7 is subject to N6-succinyllysine. At T8 the chain carries Phosphothreonine. Residue K11 is modified to N6-succinyllysine. N6-acetyllysine; alternate is present on K16. An N6-succinyllysine; alternate modification is found at K16. Phosphotyrosine is present on Y24. S35 is subject to Phosphoserine. Residue K40 is modified to N6-succinyllysine. The residue at position 49 (S49) is a Phosphoserine. An O2-binding site is contributed by H58. H87 lines the heme b pocket. A Phosphoserine modification is found at S102. The residue at position 108 (T108) is a Phosphothreonine. Residues S124 and S131 each carry the phosphoserine modification. A phosphothreonine mark is found at T134 and T137. At S138 the chain carries Phosphoserine.

It belongs to the globin family. As to quaternary structure, heterotetramer of two alpha chains and two beta chains. As to expression, red blood cells.

Its function is as follows. Involved in oxygen transport from the lung to the various peripheral tissues. Hemopressin acts as an antagonist peptide of the cannabinoid receptor CNR1. Hemopressin-binding efficiently blocks cannabinoid receptor CNR1 and subsequent signaling. This chain is Hemoglobin subunit alpha (HBA), found in Rousettus aegyptiacus (Egyptian fruit bat).